The following is a 161-amino-acid chain: SsrA-binding protein (161 aa).

It belongs to the SmpB family.

The protein localises to the cytoplasm. Functionally, required for rescue of stalled ribosomes mediated by trans-translation. Binds to transfer-messenger RNA (tmRNA), required for stable association of tmRNA with ribosomes. tmRNA and SmpB together mimic tRNA shape, replacing the anticodon stem-loop with SmpB. tmRNA is encoded by the ssrA gene; the 2 termini fold to resemble tRNA(Ala) and it encodes a 'tag peptide', a short internal open reading frame. During trans-translation Ala-aminoacylated tmRNA acts like a tRNA, entering the A-site of stalled ribosomes, displacing the stalled mRNA. The ribosome then switches to translate the ORF on the tmRNA; the nascent peptide is terminated with the 'tag peptide' encoded by the tmRNA and targeted for degradation. The ribosome is freed to recommence translation, which seems to be the essential function of trans-translation. The protein is SsrA-binding protein of Psychromonas ingrahamii (strain DSM 17664 / CCUG 51855 / 37).